A 209-amino-acid chain; its full sequence is Uracil phosphoribosyltransferase (209 aa).

5-phospho-alpha-D-ribose 1-diphosphate is bound by residues Arg79, Arg104, and 131 to 139 (DPMLATGGS). Uracil is bound by residues Ile194 and 199–201 (GDA). Asp200 contributes to the 5-phospho-alpha-D-ribose 1-diphosphate binding site.

The protein belongs to the UPRTase family. It depends on Mg(2+) as a cofactor.

It carries out the reaction UMP + diphosphate = 5-phospho-alpha-D-ribose 1-diphosphate + uracil. It functions in the pathway pyrimidine metabolism; UMP biosynthesis via salvage pathway; UMP from uracil: step 1/1. Its activity is regulated as follows. Allosterically activated by GTP. Functionally, catalyzes the conversion of uracil and 5-phospho-alpha-D-ribose 1-diphosphate (PRPP) to UMP and diphosphate. This Lysinibacillus sphaericus (strain C3-41) protein is Uracil phosphoribosyltransferase.